The sequence spans 368 residues: Phenylalanine--tRNA ligase alpha subunit (368 aa).

E268 serves as a coordination point for Mg(2+).

It belongs to the class-II aminoacyl-tRNA synthetase family. Phe-tRNA synthetase alpha subunit type 1 subfamily. Tetramer of two alpha and two beta subunits. It depends on Mg(2+) as a cofactor.

Its subcellular location is the cytoplasm. The enzyme catalyses tRNA(Phe) + L-phenylalanine + ATP = L-phenylalanyl-tRNA(Phe) + AMP + diphosphate + H(+). The protein is Phenylalanine--tRNA ligase alpha subunit of Nitrobacter hamburgensis (strain DSM 10229 / NCIMB 13809 / X14).